Here is a 541-residue protein sequence, read N- to C-terminus: MPKILEFDEHARRALERGVDALANAVKVTLGPKGRYVVLDKKWGAPTITNDGVTVAREVELDDPFENLGAQLTKEVATKTNDIAGDGTTTATVLAQAMVHEGLRAVTAGANPMGLKRGMDAAAEAVGDALKEAAREVESREDMASVATISSRDSVIGDLLAEAFDKVGKDGVITVEESNTMGTELEFTEGMQFDKGYISQYFVTDPERMEAVLEDPYILLHQGKISAVAELLPLLEKVIQSGKPLFILAEDVEGEALSTLVVNKIRGTFNAVAVKSPAFGDRRKAMMQDIATLTGGQVVAPEVGLKLDQVGLEVLGQARRVVVTKDDTTIVDGAGDPKDVEGRVNQIKAEVENTDSDWDREKLQERLAKLAGGVCVIKVGAATEVELKEKKHRIEDAVSATRAAIEEGIVAGGGSALVHAVSVLSDDLGLTGDEALGVRVVRKAADEPLRWIAENGGVNGYVVTTKVRELGLGNGFNAATEEYGDLVAQGVLDPVKVTRSALVNATSIAGMLLTTETLVVDKPEEEEPAAAGHGHGHGHGH.

Residues 29–32 (TLGP), 86–90 (DGTTT), Gly-413, 477–479 (NAA), and Asp-493 each bind ATP.

Belongs to the chaperonin (HSP60) family. As to quaternary structure, forms a cylinder of 14 subunits composed of two heptameric rings stacked back-to-back. Interacts with the co-chaperonin GroES.

The protein resides in the cytoplasm. The enzyme catalyses ATP + H2O + a folded polypeptide = ADP + phosphate + an unfolded polypeptide.. Functionally, together with its co-chaperonin GroES, plays an essential role in assisting protein folding. The GroEL-GroES system forms a nano-cage that allows encapsulation of the non-native substrate proteins and provides a physical environment optimized to promote and accelerate protein folding. This is Chaperonin GroEL 1 from Nocardioides sp. (strain ATCC BAA-499 / JS614).